The sequence spans 373 residues: ADP-forming sulfoacetate-CoA ligase subunit SauC (373 aa).

Residues 9-249 enclose the ATP-grasp domain; sequence KEAFREKGLP…YLQFNGDIAL (241 aa). 35-97 is a binding site for ATP; it reads FAEVGFPCVL…EEAVDIDREI (63 aa). Mg(2+) contacts are provided by glutamate 186 and asparagine 188.

Belongs to the succinate/malate CoA ligase beta subunit family. As to quaternary structure, forms a complex with SauD. Mg(2+) serves as cofactor.

The catalysed reaction is sulfoacetate + ATP + CoA = sulfoacetyl-CoA + ADP + phosphate. In terms of biological role, involved in the degradation of sulfoacetate. Catalyzes the CoA- and ATP-dependent conversion of sulfoacetate to sulfoacetyl-CoA and ADP. Cannot use other sulfonic and carboxylic acids, and shows only residual activity with 3-sulfopropanoate and malonic acid. In Bilophila wadsworthia (strain 3_1_6), this protein is ADP-forming sulfoacetate-CoA ligase subunit SauC.